The primary structure comprises 101 residues: Putative pterin-4-alpha-carbinolamine dehydratase (101 aa).

Belongs to the pterin-4-alpha-carbinolamine dehydratase family.

It catalyses the reaction (4aS,6R)-4a-hydroxy-L-erythro-5,6,7,8-tetrahydrobiopterin = (6R)-L-erythro-6,7-dihydrobiopterin + H2O. This Rhizobium johnstonii (strain DSM 114642 / LMG 32736 / 3841) (Rhizobium leguminosarum bv. viciae) protein is Putative pterin-4-alpha-carbinolamine dehydratase.